The sequence spans 327 residues: Phenylalanine--tRNA ligase alpha subunit (327 aa).

E252 provides a ligand contact to Mg(2+).

The protein belongs to the class-II aminoacyl-tRNA synthetase family. Phe-tRNA synthetase alpha subunit type 1 subfamily. In terms of assembly, tetramer of two alpha and two beta subunits. Mg(2+) serves as cofactor.

Its subcellular location is the cytoplasm. It catalyses the reaction tRNA(Phe) + L-phenylalanine + ATP = L-phenylalanyl-tRNA(Phe) + AMP + diphosphate + H(+). The chain is Phenylalanine--tRNA ligase alpha subunit from Photorhabdus laumondii subsp. laumondii (strain DSM 15139 / CIP 105565 / TT01) (Photorhabdus luminescens subsp. laumondii).